The chain runs to 88 residues: Anti-CBASS protein 2 (88 aa).

Tyr8, Lys9, His11, Lys23, Arg79, and Phe82 together coordinate 3',3'-cGAMP.

Belongs to the Acb2 family. As to quaternary structure, homohexamer when bound to 3',3'-cGAMP.

In terms of biological role, antagonizes CBASS (cyclic oligonucleotide-based antiphage signaling system). Binds and sequesters host-produced 3',3'-cyclic GMP-AMP (cGAMP) with a dissociation constant of about 30 nM; each homohexamer binds 3 cGAMP molecules with 1 cGAMP molecule binding to 2 monomers. Sequestration of cGAMP inhibits the cGAMP-activated phospholipase activity of host CBASS effector protein CapV. The protein is Anti-CBASS protein 2 of Enterobacteria phage T4 (Bacteriophage T4).